Consider the following 148-residue polypeptide: Macrodomain Ter protein (148 aa).

This sequence belongs to the MatP family. As to quaternary structure, homodimer.

It localises to the cytoplasm. Functionally, required for spatial organization of the terminus region of the chromosome (Ter macrodomain) during the cell cycle. Prevents early segregation of duplicated Ter macrodomains during cell division. Binds specifically to matS, which is a 13 bp signature motif repeated within the Ter macrodomain. The polypeptide is Macrodomain Ter protein (Haemophilus influenzae (strain PittGG)).